The following is a 135-amino-acid chain: Classical arabinogalactan protein 4 (135 aa).

A signal peptide spans 1–21 (MGSKIVQVFLMLALFATSALA). Pyrrolidone carboxylic acid is present on Q22. The interval 22–112 (QAPAPTPTAT…PSDASPAPSA (91 aa)) is disordered. 4-hydroxyproline occurs at positions 24, 26, 28, 32, 33, 34, 37, 38, and 39. P24, P26, P28, P32, P33, P34, P37, P38, and P39 each carry an O-linked (Ara...) hydroxyproline glycan. Pro residues predominate over residues 25 to 76 (APTPTATPPPATPPPVATPPPVATPPPAATPAPATPPPAATPAPATTPPSVA). Residues 96-112 (SPSSAPGPSDASPAPSA) show a composition bias toward low complexity. A lipid anchor (GPI-anchor amidated serine) is attached at S111. The propeptide at 112-135 (AAFSNKAFFAGTAFAAIMYAAVLA) is removed in mature form.

The protein belongs to the classical AGP family. Post-translationally, O-glycosylated on hydroxyprolines; noncontiguous hydroxylproline residues are glycosylated with arabinogalactan. As to expression, highly expressed in roots, flowers and leaves.

It is found in the cell membrane. In terms of biological role, proteoglycan that seems to be implicated in diverse developmental roles such as differentiation, cell-cell recognition, embryogenesis and programmed cell death. The polypeptide is Classical arabinogalactan protein 4 (AGP4) (Arabidopsis thaliana (Mouse-ear cress)).